A 420-amino-acid chain; its full sequence is Replication factor C large subunit (420 aa).

Residue 46-53 (GVQGSGKT) participates in ATP binding.

It belongs to the activator 1 small subunits family. RfcL subfamily. Heteromultimer composed of small subunits (RfcS) and large subunits (RfcL).

In terms of biological role, part of the RFC clamp loader complex which loads the PCNA sliding clamp onto DNA. This chain is Replication factor C large subunit, found in Thermoplasma volcanium (strain ATCC 51530 / DSM 4299 / JCM 9571 / NBRC 15438 / GSS1).